We begin with the raw amino-acid sequence, 214 residues long: dITP/XTP pyrophosphatase (214 aa).

Residue 16–21 participates in substrate binding; it reads THNPGK. Asp48 and Asp77 together coordinate Mg(2+). Asp77 acts as the Proton acceptor in catalysis. Residues Ser78, 163–166, Lys186, and 198–199 contribute to the substrate site; these read FGYD and HR.

This sequence belongs to the HAM1 NTPase family. In terms of assembly, homodimer. Mg(2+) serves as cofactor.

It carries out the reaction XTP + H2O = XMP + diphosphate + H(+). It catalyses the reaction dITP + H2O = dIMP + diphosphate + H(+). The catalysed reaction is ITP + H2O = IMP + diphosphate + H(+). Functionally, pyrophosphatase that catalyzes the hydrolysis of nucleoside triphosphates to their monophosphate derivatives, with a high preference for the non-canonical purine nucleotides XTP (xanthosine triphosphate), dITP (deoxyinosine triphosphate) and ITP. Seems to function as a house-cleaning enzyme that removes non-canonical purine nucleotides from the nucleotide pool, thus preventing their incorporation into DNA/RNA and avoiding chromosomal lesions. In Bradyrhizobium sp. (strain BTAi1 / ATCC BAA-1182), this protein is dITP/XTP pyrophosphatase.